The primary structure comprises 406 residues: LIM/homeobox protein Lhx2 (406 aa).

2 consecutive LIM zinc-binding domains span residues 53 to 105 (CAGC…CKED) and 115 to 168 (CARC…CRLH). Positions 250 to 270 (DAEHLDRDQPYPSSQKTKRMR) are disordered. Positions 266-325 (TKRMRTSFKHHQLRTMKSYFAINHNPDAKDLKQLAQKTGLTKRVLQVWFQNARAKFRRNL) form a DNA-binding region, homeobox. Positions 307-323 (KRVLQVWFQNARAKFRR) match the Nuclear localization signal motif. Positions 328–356 (QENTGVDKTSDATLQTGTPSGPASELSNA) are enriched in polar residues. Disordered regions lie at residues 328-375 (QENT…SPTL) and 387-406 (GNLE…TNLF). The segment covering 357-375 (SLSPSSTPTTLTDLTSPTL) has biased composition (low complexity). Residues 396-406 (SPSQTTLTNLF) show a composition bias toward polar residues.

Interacts (via LIM domains) with CITED2. Interacts with POU4F2 isoform 1.

The protein resides in the nucleus. Acts as a transcriptional activator. Stimulates the promoter of the alpha-glycoprotein gene. Transcriptional regulatory protein involved in the control of cell differentiation in developing lymphoid and neural cell types. The sequence is that of LIM/homeobox protein Lhx2 (Lhx2) from Mus musculus (Mouse).